Here is a 299-residue protein sequence, read N- to C-terminus: Acetylglutamate kinase (299 aa).

Residues 64–65, arginine 86, and asparagine 197 contribute to the substrate site; that span reads GG.

Belongs to the acetylglutamate kinase family. ArgB subfamily.

It localises to the cytoplasm. The enzyme catalyses N-acetyl-L-glutamate + ATP = N-acetyl-L-glutamyl 5-phosphate + ADP. The protein operates within amino-acid biosynthesis; L-arginine biosynthesis; N(2)-acetyl-L-ornithine from L-glutamate: step 2/4. Functionally, catalyzes the ATP-dependent phosphorylation of N-acetyl-L-glutamate. The protein is Acetylglutamate kinase of Sulfurihydrogenibium sp. (strain YO3AOP1).